We begin with the raw amino-acid sequence, 513 residues long: ATP synthase subunit alpha (513 aa).

169–176 (GDRQTGKT) serves as a coordination point for ATP.

The protein belongs to the ATPase alpha/beta chains family. In terms of assembly, F-type ATPases have 2 components, CF(1) - the catalytic core - and CF(0) - the membrane proton channel. CF(1) has five subunits: alpha(3), beta(3), gamma(1), delta(1), epsilon(1). CF(0) has three main subunits: a(1), b(2) and c(9-12). The alpha and beta chains form an alternating ring which encloses part of the gamma chain. CF(1) is attached to CF(0) by a central stalk formed by the gamma and epsilon chains, while a peripheral stalk is formed by the delta and b chains.

Its subcellular location is the cell inner membrane. The catalysed reaction is ATP + H2O + 4 H(+)(in) = ADP + phosphate + 5 H(+)(out). Produces ATP from ADP in the presence of a proton gradient across the membrane. The alpha chain is a regulatory subunit. This is ATP synthase subunit alpha from Pasteurella multocida (strain Pm70).